Reading from the N-terminus, the 341-residue chain is MKNLIEVLMLTFNEPLYLFLLVIFPLIIYFNHFLKNRGGKIKFPISLYGNFNSLKLKDYRLNLMYFFTYSFLYLAAMVMVFALAGPSVSKKKMIHLSAGADIVIVLDISPSMGAVEFSSKNRLEFSKELIRGFISQRENDNIGLVAFAKDASIVVPITTDREFFNKKLDDIYIMDLGNGSALGLGISIALSHLKHSEALKRSIVVLTDGVVNSDEIXKDQVINLAQGLNVKIYSIGIGSSEEFSVEFKLRSGKFYQGSFKEVYDPSMLVEISNKTGGLFYSVNDDFSFQFAIQDFSKKENLERKIKIAVDNKDIYKEFLVLAFCLLLVYFIFSKIFLKEIL.

Transmembrane regions (helical) follow at residues 8-28 (LMLT…PLII), 63-83 (LMYF…VFAL), 171-191 (IYIM…IALS), and 317-337 (EFLV…KIFL). Residues 101–305 (DIVIVLDISP…SKKENLERKI (205 aa)) form the VWFA domain.

Its subcellular location is the cell membrane. This is an uncharacterized protein from Borreliella burgdorferi (strain ATCC 35210 / DSM 4680 / CIP 102532 / B31) (Borrelia burgdorferi).